Reading from the N-terminus, the 284-residue chain is 2-dehydro-3-deoxyphosphooctonate aldolase (284 aa).

Belongs to the KdsA family.

The protein resides in the cytoplasm. The enzyme catalyses D-arabinose 5-phosphate + phosphoenolpyruvate + H2O = 3-deoxy-alpha-D-manno-2-octulosonate-8-phosphate + phosphate. It functions in the pathway carbohydrate biosynthesis; 3-deoxy-D-manno-octulosonate biosynthesis; 3-deoxy-D-manno-octulosonate from D-ribulose 5-phosphate: step 2/3. It participates in bacterial outer membrane biogenesis; lipopolysaccharide biosynthesis. The sequence is that of 2-dehydro-3-deoxyphosphooctonate aldolase from Actinobacillus succinogenes (strain ATCC 55618 / DSM 22257 / CCUG 43843 / 130Z).